The following is a 343-amino-acid chain: Branched-chain-amino-acid aminotransferase (343 aa).

Position 182 is an N6-(pyridoxal phosphate)lysine (Lys-182).

The protein belongs to the class-IV pyridoxal-phosphate-dependent aminotransferase family. Pyridoxal 5'-phosphate serves as cofactor.

It catalyses the reaction L-leucine + 2-oxoglutarate = 4-methyl-2-oxopentanoate + L-glutamate. The enzyme catalyses L-isoleucine + 2-oxoglutarate = (S)-3-methyl-2-oxopentanoate + L-glutamate. The catalysed reaction is L-valine + 2-oxoglutarate = 3-methyl-2-oxobutanoate + L-glutamate. It functions in the pathway amino-acid biosynthesis; L-isoleucine biosynthesis; L-isoleucine from 2-oxobutanoate: step 4/4. The protein operates within amino-acid biosynthesis; L-leucine biosynthesis; L-leucine from 3-methyl-2-oxobutanoate: step 4/4. Its pathway is amino-acid biosynthesis; L-valine biosynthesis; L-valine from pyruvate: step 4/4. In terms of biological role, acts on leucine, isoleucine and valine. This chain is Branched-chain-amino-acid aminotransferase (ilvE), found in Haemophilus influenzae (strain ATCC 51907 / DSM 11121 / KW20 / Rd).